A 480-amino-acid polypeptide reads, in one-letter code: Probable efflux pump outer membrane protein SepC (480 aa).

Residues 1-16 (MKTHYLSIALSVALSG) form the signal peptide. Cys17 is lipidated: N-palmitoyl cysteine. A lipid anchor (S-diacylglycerol cysteine) is attached at Cys17.

Belongs to the outer membrane factor (OMF) (TC 1.B.17) family.

It is found in the cell outer membrane. Its function is as follows. Probable outer membrane component of the SepABC efflux pump with unknown specificity. The polypeptide is Probable efflux pump outer membrane protein SepC (sepC) (Pseudomonas putida (strain ATCC 700007 / DSM 6899 / JCM 31910 / BCRC 17059 / LMG 24140 / F1)).